The sequence spans 427 residues: Forkhead box protein A1-B (427 aa).

The fork-head DNA-binding region spans Lys-157 to Lys-251. The span at Glu-256–Ser-272 shows a compositional bias: basic and acidic residues. Positions Glu-256 to Ala-336 are disordered. Residues Ser-285–Gln-302 are compositionally biased toward low complexity. Positions Pro-323–Ser-334 are enriched in polar residues.

As to expression, present in the vegetal pole and marginal zone but not the animal pole of gastrulae and in equal levels in the dorsal and ventral halves of both gastrulae and neurulae. At neurula stage, expressed in the notochord. During tailbud stages, expressed in the foregut, brain, hypocord, neural floor plate and in two lines of cells just dorsal and ventral to the notochord. Expressed in the adult liver.

It localises to the nucleus. Functionally, probable transcription factor. The chain is Forkhead box protein A1-B (foxa1-b) from Xenopus laevis (African clawed frog).